Consider the following 642-residue polypeptide: Threonine--tRNA ligase (642 aa).

The 61-residue stretch at methionine 1–threonine 61 folds into the TGS domain. The interval aspartate 243–proline 534 is catalytic. The Zn(2+) site is built by cysteine 334, histidine 385, and histidine 511.

The protein belongs to the class-II aminoacyl-tRNA synthetase family. As to quaternary structure, homodimer. Zn(2+) serves as cofactor.

Its subcellular location is the cytoplasm. The catalysed reaction is tRNA(Thr) + L-threonine + ATP = L-threonyl-tRNA(Thr) + AMP + diphosphate + H(+). Catalyzes the attachment of threonine to tRNA(Thr) in a two-step reaction: L-threonine is first activated by ATP to form Thr-AMP and then transferred to the acceptor end of tRNA(Thr). Also edits incorrectly charged L-seryl-tRNA(Thr). The sequence is that of Threonine--tRNA ligase from Salmonella paratyphi A (strain ATCC 9150 / SARB42).